We begin with the raw amino-acid sequence, 96 residues long: Putative pterin-4-alpha-carbinolamine dehydratase (96 aa).

This sequence belongs to the pterin-4-alpha-carbinolamine dehydratase family.

The enzyme catalyses (4aS,6R)-4a-hydroxy-L-erythro-5,6,7,8-tetrahydrobiopterin = (6R)-L-erythro-6,7-dihydrobiopterin + H2O. In Prochlorococcus marinus (strain MIT 9301), this protein is Putative pterin-4-alpha-carbinolamine dehydratase.